Consider the following 276-residue polypeptide: Tryptophan synthase alpha chain (276 aa).

Active-site proton acceptor residues include Glu-55 and Asp-66.

The protein belongs to the TrpA family. Tetramer of two alpha and two beta chains.

The catalysed reaction is (1S,2R)-1-C-(indol-3-yl)glycerol 3-phosphate + L-serine = D-glyceraldehyde 3-phosphate + L-tryptophan + H2O. It functions in the pathway amino-acid biosynthesis; L-tryptophan biosynthesis; L-tryptophan from chorismate: step 5/5. Its function is as follows. The alpha subunit is responsible for the aldol cleavage of indoleglycerol phosphate to indole and glyceraldehyde 3-phosphate. The chain is Tryptophan synthase alpha chain from Gloeobacter violaceus (strain ATCC 29082 / PCC 7421).